Reading from the N-terminus, the 448-residue chain is Antizyme inhibitor 1 (448 aa).

This sequence belongs to the Orn/Lys/Arg decarboxylase class-II family. ODC antizyme inhibitor subfamily. As to quaternary structure, monomer. Interacts with OAZ1 and OAZ3; this interaction disrupts the interaction between the antizyme and ODC1. Post-translationally, ubiquitinated, leading to its proteasomal degradation; a process that is reduced in presence of antizyme OAZ1. In terms of tissue distribution, expressed in various tissues including liver, heart and kidney.

Its subcellular location is the nucleus. Antizyme inhibitor (AZI) protein that positively regulates ornithine decarboxylase (ODC) activity and polyamine uptake. AZI is an enzymatically inactive ODC homolog that counteracts the negative effect of ODC antizymes (AZs) OAZ1, OAZ2 and OAZ3 on ODC activity by competing with ODC for antizyme-binding. Inhibits antizyme-dependent ODC degradation and releases ODC monomers from their inactive complex with antizymes, leading to formation of the catalytically active ODC homodimer and restoring polyamine production. The protein is Antizyme inhibitor 1 (Azin1) of Rattus norvegicus (Rat).